A 213-amino-acid chain; its full sequence is ATP phosphoribosyltransferase (213 aa).

The protein belongs to the ATP phosphoribosyltransferase family. Short subfamily. In terms of assembly, heteromultimer composed of HisG and HisZ subunits.

It is found in the cytoplasm. The enzyme catalyses 1-(5-phospho-beta-D-ribosyl)-ATP + diphosphate = 5-phospho-alpha-D-ribose 1-diphosphate + ATP. The protein operates within amino-acid biosynthesis; L-histidine biosynthesis; L-histidine from 5-phospho-alpha-D-ribose 1-diphosphate: step 1/9. Catalyzes the condensation of ATP and 5-phosphoribose 1-diphosphate to form N'-(5'-phosphoribosyl)-ATP (PR-ATP). Has a crucial role in the pathway because the rate of histidine biosynthesis seems to be controlled primarily by regulation of HisG enzymatic activity. The protein is ATP phosphoribosyltransferase of Thermoanaerobacter pseudethanolicus (strain ATCC 33223 / 39E) (Clostridium thermohydrosulfuricum).